Reading from the N-terminus, the 540-residue chain is Serine/threonine-protein phosphatase ppzA (540 aa).

Disordered regions lie at residues 1–108 (MGQS…KRGH) and 120–140 (VDHVSDVPPTGAAPTGPSTQK). Composition is skewed to polar residues over residues 15–24 (SLQSYPSFSR) and 45–54 (SDSPRGSTAG). A compositionally biased stretch (low complexity) spans 62-88 (AASVKSTTSRRSSTNQSVQSPDDTPSQ). Over residues 89–98 (PDAPEPPPSP) the composition is skewed to pro residues. Positions 127 to 136 (PPTGAAPTGP) are enriched in low complexity. Mn(2+) contacts are provided by Asp-239, His-241, Asp-267, and Asn-299. Residues 258-540 (PASNYLFLGD…SLVTSWGISR (283 aa)) enclose the Phosphatase tensin-type domain. His-300 acts as the Proton donor in catalysis. The Mn(2+) site is built by His-348 and His-423.

The protein belongs to the PPP phosphatase family. PP-Z subfamily. In terms of assembly, interacts with at least 54 proteins, of which 31 are detected only after iron starvation and 22 are detected only in control conditions. Only the regulatory subunit of the protein phosphatase PP1 (Afu1g04800/AFUB_005140) interacts with ppzA in both conditions. Mn(2+) serves as cofactor.

The protein localises to the cytoplasm. The enzyme catalyses O-phospho-L-seryl-[protein] + H2O = L-seryl-[protein] + phosphate. The catalysed reaction is O-phospho-L-threonyl-[protein] + H2O = L-threonyl-[protein] + phosphate. Its function is as follows. Catalytic subunit of protein phosphatase Z (PPZ) involved in iron assimilation. Regulates secondary metabolites production, including gliotoxin, pyripyropene A, fumagillin, fumiquinazoline A, triacetyl-fusarinine C, and helvolic acid. Plays a key role in pathogenicity. The polypeptide is Serine/threonine-protein phosphatase ppzA (Aspergillus fumigatus (strain CBS 144.89 / FGSC A1163 / CEA10) (Neosartorya fumigata)).